We begin with the raw amino-acid sequence, 115 residues long: UPF0102 protein NMA0341 (115 aa).

Belongs to the UPF0102 family.

The chain is UPF0102 protein NMA0341 from Neisseria meningitidis serogroup A / serotype 4A (strain DSM 15465 / Z2491).